The following is a 778-amino-acid chain: DISP complex protein LRCH3 (778 aa).

LRR repeat units lie at residues 56–79, 81–104, 105–127, 128–150, 152–172, 173–195, 197–218, 220–239, 240–264, and 266–290; these read AAVTGVLSLSGRKLREFPRGAANH, LTDTTRADLSRNRLSEIPMEACHF, VSLESLNLYQNCIRYIPEAVLNL, QALTFLNISRNQLSTLPVHLCNL, LKVLIASNNKLVSLPEEIGHL, RHLTELDVSCNEIQTVPSQIGNL, ALRDFNVRRNHLLRLPEELAEV, LIRLDFSCNKITVIPVCYRN, LRHLQVITLDNNPLQSPPAQICIKG, and IHIFKYLNIQACKIAPDLPDYERRP. The mediates interaction with DOCK7 stretch occupies residues 56–290; it reads AAVTGVLSLS…PDLPDYERRP (235 aa). Residues Ser-324, Ser-415, and Ser-419 each carry the phosphoserine modification. Positions 382–642 are mediates direct interaction with MYO6; sequence TTEEEENDVK…PATDPTDAIT (261 aa). Positions 511–536 are disordered; sequence QKASHNPQRQQPPGNGECSFPSRRSQ. The span at 514 to 523 shows a compositional bias: polar residues; that stretch reads SHNPQRQQPP. Ser-608 and Ser-625 each carry phosphoserine. The Calponin-homology (CH) domain occupies 645–758; it reads REEELKLIDQ…VTVQALLELA (114 aa). The segment at 758–778 is disordered; it reads APPKQPPPQQPQQQQPQLSAV. Positions 768–778 are enriched in low complexity; sequence PQQQQPQLSAV.

As to quaternary structure, component of the DOCK7-induced septin displacement/DISP complex, at least composed of DOCK7, LRCH3 and MYO6.

It is found in the cytoplasm. Functionally, as part of the DISP complex, may regulate the association of septins with actin and thereby regulate the actin cytoskeleton. The polypeptide is DISP complex protein LRCH3 (Mus musculus (Mouse)).